Here is a 424-residue protein sequence, read N- to C-terminus: CinA-like protein (424 aa).

Belongs to the CinA family.

The sequence is that of CinA-like protein from Prochlorococcus marinus (strain MIT 9301).